Reading from the N-terminus, the 215-residue chain is Cytochrome c biogenesis ATP-binding export protein CcmA (215 aa).

The ABC transporter domain occupies 3 to 211 (LTAENLAARR…KMTGFAGVDR (209 aa)). Residue 35–42 (GRNGSGKS) coordinates ATP.

It belongs to the ABC transporter superfamily. CcmA exporter (TC 3.A.1.107) family. The complex is composed of two ATP-binding proteins (CcmA) and two transmembrane proteins (CcmB).

Its subcellular location is the cell inner membrane. It carries out the reaction heme b(in) + ATP + H2O = heme b(out) + ADP + phosphate + H(+). In terms of biological role, part of the ABC transporter complex CcmAB involved in the biogenesis of c-type cytochromes; once thought to export heme, this seems not to be the case, but its exact role is uncertain. Responsible for energy coupling to the transport system. This Rhizobium etli (strain ATCC 51251 / DSM 11541 / JCM 21823 / NBRC 15573 / CFN 42) protein is Cytochrome c biogenesis ATP-binding export protein CcmA.